The chain runs to 147 residues: Ribonuclease H (147 aa).

D8, E46, D68, and D132 together coordinate Mg(2+).

The protein belongs to the RNase H family. Monomer. Mg(2+) serves as cofactor.

It localises to the cytoplasm. It carries out the reaction Endonucleolytic cleavage to 5'-phosphomonoester.. Endonuclease that specifically degrades the RNA of RNA-DNA hybrids. The polypeptide is Ribonuclease H (Geotalea uraniireducens (strain Rf4) (Geobacter uraniireducens)).